Here is a 91-residue protein sequence, read N- to C-terminus: Glycophorin-B (91 aa).

The signal sequence occupies residues 1-19 (MYGKIIFVLLLSEIVSISA). The Extracellular segment spans residues 20-59 (LSTTEVAMHTSTSSSVTKSYISSQTNGETGQLVHRFTVPA). O-linked (GalNAc...) threonine glycosylation occurs at T36. S38 carries an O-linked (GalNAc...) serine glycan. A helical membrane pass occupies residues 60 to 81 (PVVIILIILCVMAGIIGTILLI). The Cytoplasmic portion of the chain corresponds to 82–91 (SYSIRRLIKA).

The protein belongs to the glycophorin-A family. As to quaternary structure, component of the ankyrin-1 complex in the erythrocyte, composed of ANK1, RHCE, RHAG, SLC4A1, EPB42, GYPA, GYPB and AQP1. Interacts (via the N-terminal) with RHAG; this interaction bridges the (RHAG)2(RHCE) heterotrimer with the SLC4A1 Band 3 I dimer complexed with GYPA. The N-terminal extracellular domain is heavily glycosylated on serine and threonine residues.

Its subcellular location is the cell membrane. In terms of biological role, component of the ankyrin-1 complex, a multiprotein complex involved in the stability and shape of the erythrocyte membrane. This chain is Glycophorin-B, found in Homo sapiens (Human).